A 393-amino-acid chain; its full sequence is Elongation factor Tu (393 aa).

Residues 6–204 enclose the tr-type G domain; sequence KPHINVGTIG…ALEKIELPVR (199 aa). Residues 15 to 22 form a G1 region; it reads GHVDHGKT. GTP is bound at residue 15-22; that stretch reads GHVDHGKT. Thr22 serves as a coordination point for Mg(2+). Residues 58 to 62 are G2; sequence GITIS. The interval 79 to 82 is G3; sequence DCPG. GTP contacts are provided by residues 79–83 and 134–137; these read DCPGH and NKCD. Positions 134-137 are G4; it reads NKCD. The G5 stretch occupies residues 172 to 174; it reads SAV.

This sequence belongs to the TRAFAC class translation factor GTPase superfamily. Classic translation factor GTPase family. EF-Tu/EF-1A subfamily. As to quaternary structure, monomer.

The protein resides in the cytoplasm. It carries out the reaction GTP + H2O = GDP + phosphate + H(+). Functionally, GTP hydrolase that promotes the GTP-dependent binding of aminoacyl-tRNA to the A-site of ribosomes during protein biosynthesis. This is Elongation factor Tu from Anaplasma marginale (strain St. Maries).